The chain runs to 269 residues: Shikimate dehydrogenase (NADP(+)) (269 aa).

Residues 17–19 (SKS) and Thr-64 each bind shikimate. Lys-68 (proton acceptor) is an active-site residue. Position 80 (Glu-80) interacts with NADP(+). Residues Asn-89 and Asp-105 each contribute to the shikimate site. NADP(+) contacts are provided by residues 130–134 (GAGGA), 154–159 (NRTRAK), and Met-213. Tyr-215 is a shikimate binding site. An NADP(+)-binding site is contributed by Gly-237.

Belongs to the shikimate dehydrogenase family. Homodimer.

The catalysed reaction is shikimate + NADP(+) = 3-dehydroshikimate + NADPH + H(+). It functions in the pathway metabolic intermediate biosynthesis; chorismate biosynthesis; chorismate from D-erythrose 4-phosphate and phosphoenolpyruvate: step 4/7. In terms of biological role, involved in the biosynthesis of the chorismate, which leads to the biosynthesis of aromatic amino acids. Catalyzes the reversible NADPH linked reduction of 3-dehydroshikimate (DHSA) to yield shikimate (SA). The polypeptide is Shikimate dehydrogenase (NADP(+)) (Neisseria meningitidis serogroup C / serotype 2a (strain ATCC 700532 / DSM 15464 / FAM18)).